A 124-amino-acid polypeptide reads, in one-letter code: uncharacterized protein (124 aa).

Residues 13–33 (IIFMALYFVITGIVIRLIGYS) form a helical membrane-spanning segment.

The protein resides in the membrane. This is an uncharacterized protein from Bacillus anthracis.